The sequence spans 505 residues: MAQIDFRKKINWHRRYRSPQGVKTEHEILRIFESDRGRIINSPAIRRLQQKTQVFPLERNAAVRTRLTHSMEVQQVGRYIAKEILSRLKELKLLEAYGLDELTGPFESIVEMSCLMHDIGNPPFGHLGEAAINDWFRQRLHPEDAESQPLTDDRCSVAGLRLRDGEEPLNELRRKIRQDLCHFEGNAQGIRLVHTLMRMNLTWAQVGGILKYTRPAWWRGETPETHHYLMKKPGYYLSEEAYIARLRKELNLALYSRFPLTWIMEAADDISYCVADLEDAVEKRIFTVEQLYHHLHEAWGQHEKGSLFSLVVENAWEKSRSNSLSRSTEDQFFMYLRVNTLNKLVPYAAQRFIDNLPAIFAGTFNHALLEDASECSDLLKLYKNVAVKHVFSHPDVERLELQGYRVISGLLEIYRPLLSLSLSDFTELVEKERVKRFPIESRLFHKLSTPHRLAYVEAVSKLPSDSPEFPLWEYYYRCRLLQDYISGMTDLYAWDEYRRLMAVEQ.

Positions Arg66–Cys273 constitute an HD domain.

This sequence belongs to the dGTPase family. Type 1 subfamily. As to quaternary structure, homotetramer. Mg(2+) serves as cofactor.

It carries out the reaction dGTP + H2O = 2'-deoxyguanosine + triphosphate + H(+). In terms of biological role, dGTPase preferentially hydrolyzes dGTP over the other canonical NTPs. The protein is Deoxyguanosinetriphosphate triphosphohydrolase of Escherichia fergusonii (strain ATCC 35469 / DSM 13698 / CCUG 18766 / IAM 14443 / JCM 21226 / LMG 7866 / NBRC 102419 / NCTC 12128 / CDC 0568-73).